Consider the following 466-residue polypeptide: Ferrochelatase-1, chloroplastic/mitochondrial (466 aa).

The span at 1-11 shows a compositional bias: polar residues; it reads MQATALSSGFN. The interval 1-23 is disordered; the sequence is MQATALSSGFNPLTKRKDHRFPR. The transit peptide at 1–35 directs the protein to the chloroplast and mitochondrion; it reads MQATALSSGFNPLTKRKDHRFPRSCSQRNSLSLIQ.

The protein belongs to the ferrochelatase family. Expressed in roots, leaves, stems and flowers. Present in both leaves and roots.

It is found in the plastid. The protein resides in the chloroplast membrane. Its subcellular location is the chloroplast thylakoid membrane. It localises to the mitochondrion. It catalyses the reaction heme b + 2 H(+) = protoporphyrin IX + Fe(2+). Its pathway is porphyrin-containing compound metabolism; protoheme biosynthesis; protoheme from protoporphyrin-IX: step 1/1. Functionally, catalyzes the last step of heme biosynthesis by inserting ferrous iron into protoporphyrin IX to produce protoheme. Produces heme for photosynthetic cytochromes, but does not seem to be involved in stress responses. May be involved in wound-induced supply of heme to defensive hemoproteins outside plastids. Regulates the expression of photosynthesis-associated nuclear genes in undeveloped chloroplasts through production of heme. This chain is Ferrochelatase-1, chloroplastic/mitochondrial, found in Arabidopsis thaliana (Mouse-ear cress).